Here is a 211-residue protein sequence, read N- to C-terminus: Large ribosomal subunit protein uL4 (211 aa).

Residues Gln-41–Thr-53 show a composition bias toward polar residues. The segment at Gln-41–Ile-78 is disordered. The span at Gly-60–Gly-71 shows a compositional bias: basic residues.

The protein belongs to the universal ribosomal protein uL4 family. As to quaternary structure, part of the 50S ribosomal subunit.

One of the primary rRNA binding proteins, this protein initially binds near the 5'-end of the 23S rRNA. It is important during the early stages of 50S assembly. It makes multiple contacts with different domains of the 23S rRNA in the assembled 50S subunit and ribosome. Its function is as follows. Forms part of the polypeptide exit tunnel. This chain is Large ribosomal subunit protein uL4, found in Prochlorococcus marinus (strain MIT 9313).